The following is a 446-amino-acid chain: Long-chain fatty acid transport protein (446 aa).

An N-terminal signal peptide occupies residues Met-1–Ser-25.

This sequence belongs to the OmpP1/FadL family. As to quaternary structure, has been isolated from outer membrane preparation as a homodimer.

The protein resides in the cell outer membrane. Functionally, involved in translocation of long-chain fatty acids across the outer membrane. It is a receptor for the bacteriophage T2. FadL may form a specific channel. The sequence is that of Long-chain fatty acid transport protein (fadL) from Escherichia coli (strain K12).